The sequence spans 364 residues: Dihydroorotate dehydrogenase (quinone) (364 aa).

Residues 61-65 (AGFDK) and threonine 85 contribute to the FMN site. Lysine 65 serves as a coordination point for substrate. 110–114 (NRMGF) serves as a coordination point for substrate. The FMN site is built by asparagine 139 and asparagine 170. Asparagine 170 lines the substrate pocket. The Nucleophile role is filled by serine 173. Position 175 (asparagine 175) interacts with substrate. FMN-binding residues include lysine 214 and alanine 242. Position 243–244 (243–244 (NT)) interacts with substrate. Residues glycine 266, glycine 295, and 316 to 317 (YS) contribute to the FMN site.

The protein belongs to the dihydroorotate dehydrogenase family. Type 2 subfamily. Monomer. The cofactor is FMN.

The protein resides in the cell membrane. It carries out the reaction (S)-dihydroorotate + a quinone = orotate + a quinol. The protein operates within pyrimidine metabolism; UMP biosynthesis via de novo pathway; orotate from (S)-dihydroorotate (quinone route): step 1/1. In terms of biological role, catalyzes the conversion of dihydroorotate to orotate with quinone as electron acceptor. The sequence is that of Dihydroorotate dehydrogenase (quinone) from Rhodopseudomonas palustris (strain HaA2).